A 792-amino-acid polypeptide reads, in one-letter code: Phenylalanine--tRNA ligase beta subunit (792 aa).

The tRNA-binding domain occupies 39–147 (GESLGQVVVA…DDAPVGQALA (109 aa)). Residues 400 to 475 (PQPVHIRLRR…RIHGYDRVPT (76 aa)) form the B5 domain. Residues Asp453, Asp459, Glu462, and Glu463 each coordinate Mg(2+). Residues 698–791 (SRFPSVRRDL…IEREHRARIR (94 aa)) form the FDX-ACB domain.

Belongs to the phenylalanyl-tRNA synthetase beta subunit family. Type 1 subfamily. As to quaternary structure, tetramer of two alpha and two beta subunits. Mg(2+) is required as a cofactor.

It is found in the cytoplasm. It catalyses the reaction tRNA(Phe) + L-phenylalanine + ATP = L-phenylalanyl-tRNA(Phe) + AMP + diphosphate + H(+). The protein is Phenylalanine--tRNA ligase beta subunit of Xanthomonas axonopodis pv. citri (strain 306).